The sequence spans 88 residues: Small ribosomal subunit protein bS20 (88 aa).

The segment at 1 to 33 (MANTSSAKKATRKIARRTAVNKSRRTQMRGSVR) is disordered.

This sequence belongs to the bacterial ribosomal protein bS20 family.

Functionally, binds directly to 16S ribosomal RNA. This Rhodopseudomonas palustris (strain BisB5) protein is Small ribosomal subunit protein bS20.